A 605-amino-acid polypeptide reads, in one-letter code: Vicilin GC72-A (605 aa).

An N-terminal signal peptide occupies residues 1–23 (MVRNKSVFVVLLFSLFLSFGLLC). 2 disordered regions span residues 52-81 (TRGQ…EDPQ) and 157-181 (GERE…QRNN). Residues 166 to 175 (EEEEESDEGE) show a composition bias toward acidic residues. Cupin type-1 domains follow at residues 183-341 (YYFH…EQLD) and 387-564 (FNLL…RLVD). Positions 465 to 485 (SSDWSSREEEEQEEQEVERRS) are disordered.

Belongs to the 7S seed storage protein family.

The protein localises to the vacuole. It localises to the aleurone grain. Functionally, seed storage protein. This chain is Vicilin GC72-A, found in Gossypium hirsutum (Upland cotton).